The primary structure comprises 34 residues: Photosystem II reaction center protein M (34 aa).

The helical transmembrane segment at 5 to 25 (ILAFIATTLFVLVPTAFLLII) threads the bilayer.

This sequence belongs to the PsbM family. As to quaternary structure, PSII is composed of 1 copy each of membrane proteins PsbA, PsbB, PsbC, PsbD, PsbE, PsbF, PsbH, PsbI, PsbJ, PsbK, PsbL, PsbM, PsbT, PsbX, PsbY, PsbZ, Psb30/Ycf12, at least 3 peripheral proteins of the oxygen-evolving complex and a large number of cofactors. It forms dimeric complexes.

It localises to the plastid. The protein resides in the chloroplast thylakoid membrane. In terms of biological role, one of the components of the core complex of photosystem II (PSII). PSII is a light-driven water:plastoquinone oxidoreductase that uses light energy to abstract electrons from H(2)O, generating O(2) and a proton gradient subsequently used for ATP formation. It consists of a core antenna complex that captures photons, and an electron transfer chain that converts photonic excitation into a charge separation. This subunit is found at the monomer-monomer interface. The polypeptide is Photosystem II reaction center protein M (Citrus sinensis (Sweet orange)).